A 403-amino-acid chain; its full sequence is Phosphopentomutase (403 aa).

6 residues coordinate Mn(2+): Asp13, Asp298, His303, Asp339, His340, and His351.

This sequence belongs to the phosphopentomutase family. It depends on Mn(2+) as a cofactor.

The protein resides in the cytoplasm. It catalyses the reaction 2-deoxy-alpha-D-ribose 1-phosphate = 2-deoxy-D-ribose 5-phosphate. The enzyme catalyses alpha-D-ribose 1-phosphate = D-ribose 5-phosphate. It participates in carbohydrate degradation; 2-deoxy-D-ribose 1-phosphate degradation; D-glyceraldehyde 3-phosphate and acetaldehyde from 2-deoxy-alpha-D-ribose 1-phosphate: step 1/2. Isomerase that catalyzes the conversion of deoxy-ribose 1-phosphate (dRib-1-P) and ribose 1-phosphate (Rib-1-P) to deoxy-ribose 5-phosphate (dRib-5-P) and ribose 5-phosphate (Rib-5-P), respectively. The sequence is that of Phosphopentomutase from Streptococcus pneumoniae serotype 2 (strain D39 / NCTC 7466).